A 394-amino-acid chain; its full sequence is Flap endonuclease 1 (394 aa).

Residues 1-104 (MGIKQLFTII…GELARRYQRK (104 aa)) form an N-domain region. Mg(2+) is bound at residue D34. Residues R47 and R70 each contribute to the DNA site. D86, E158, E160, D179, and D181 together coordinate Mg(2+). An I-domain region spans residues 122-253 (DVEKFSRRTV…STALKLIREH (132 aa)). E158 contacts DNA. DNA is bound by residues G231 and D233. D233 contributes to the Mg(2+) binding site. The interval 340 to 348 (QQQRLEGFF) is interaction with PCNA. The interval 358-394 (QKAHKRKLEVKAEEAKKKLKAEKKEKAKAKARPRGTA) is disordered. A compositionally biased stretch (basic residues) spans 374–394 (KKLKAEKKEKAKAKARPRGTA).

The protein belongs to the XPG/RAD2 endonuclease family. FEN1 subfamily. As to quaternary structure, interacts with PCNA. Three molecules of FEN1 bind to one PCNA trimer with each molecule binding to one PCNA monomer. PCNA stimulates the nuclease activity without altering cleavage specificity. It depends on Mg(2+) as a cofactor. In terms of processing, phosphorylated. Phosphorylation upon DNA damage induces relocalization to the nuclear plasma.

It localises to the nucleus. It is found in the nucleolus. The protein resides in the nucleoplasm. The protein localises to the mitochondrion. Structure-specific nuclease with 5'-flap endonuclease and 5'-3' exonuclease activities involved in DNA replication and repair. During DNA replication, cleaves the 5'-overhanging flap structure that is generated by displacement synthesis when DNA polymerase encounters the 5'-end of a downstream Okazaki fragment. It enters the flap from the 5'-end and then tracks to cleave the flap base, leaving a nick for ligation. Also involved in the long patch base excision repair (LP-BER) pathway, by cleaving within the apurinic/apyrimidinic (AP) site-terminated flap. Acts as a genome stabilization factor that prevents flaps from equilibrating into structures that lead to duplications and deletions. Also possesses 5'-3' exonuclease activity on nicked or gapped double-stranded DNA, and exhibits RNase H activity. Also involved in replication and repair of rDNA and in repairing mitochondrial DNA. The chain is Flap endonuclease 1 from Pyricularia oryzae (strain 70-15 / ATCC MYA-4617 / FGSC 8958) (Rice blast fungus).